The following is an 835-amino-acid chain: Replication origin-binding protein (835 aa).

The region spanning 54 to 215 is the Helicase ATP-binding domain; the sequence is PGMSQTRPVT…SGLRGDENIH (162 aa). 67 to 74 is an ATP binding site; it reads APMGSGKT.

This sequence belongs to the herpesviridae OriBP family. In terms of assembly, homodimer. Interacts with the major DNA-binding protein. Interacts with the helicase/primase component 52 and the polymerase accessory protein.

It localises to the host nucleus. In terms of biological role, functions as a docking protein to recruit essential components of the viral replication machinery to viral DNA origins. In the presence of the major DNA-binding protein, opens dsDNA leading to a conformational change in the origin that facilitates DNA unwinding and subsequent replication. This Homo sapiens (Human) protein is Replication origin-binding protein.